We begin with the raw amino-acid sequence, 336 residues long: DNA-directed RNA polymerase subunit alpha (336 aa).

The interval 1–226 (MLIAQRPTLS…ELFGLARELN (226 aa)) is alpha N-terminal domain (alpha-NTD). Residues 241 to 336 (AALAADMALP…DDAAFSDDEL (96 aa)) are alpha C-terminal domain (alpha-CTD).

Belongs to the RNA polymerase alpha chain family. In terms of assembly, homodimer. The RNAP catalytic core consists of 2 alpha, 1 beta, 1 beta' and 1 omega subunit. When a sigma factor is associated with the core the holoenzyme is formed, which can initiate transcription.

The enzyme catalyses RNA(n) + a ribonucleoside 5'-triphosphate = RNA(n+1) + diphosphate. In terms of biological role, DNA-dependent RNA polymerase catalyzes the transcription of DNA into RNA using the four ribonucleoside triphosphates as substrates. This is DNA-directed RNA polymerase subunit alpha from Paenarthrobacter aurescens (strain TC1).